A 96-amino-acid chain; its full sequence is Prokineticin Bm8-e (96 aa).

The signal sequence occupies residues 1–19; it reads MKCFAQIVVLLLVIAFSHG. 5 disulfides stabilise this stretch: C26–C38, C32–C50, C37–C78, C60–C86, and C80–C95.

It belongs to the AVIT (prokineticin) family. Expressed by the skin glands.

The protein resides in the secreted. In terms of biological role, potent agonist for both PKR1/PROKR1 and PKR2/PROKR2, and inducer of a potent and long-lasting hyperalgesia. Also potentiates capsaicin-induced TRPV1 current, when tested on DRG neurons. At subnanomolar concentrations, this protein both induces potent chemotaxis of macrophages and stimulates LPS-induced production of the pro-inflammatory cytokines IL-1 and IL-12. In vivo, potently stimulates the contraction of the guinea-pig gastrointestinal (GI) smooth muscle (nanomolar concentration). This chain is Prokineticin Bm8-e, found in Bombina maxima (Giant fire-bellied toad).